The sequence spans 91 residues: ATP synthase subunit c (91 aa).

The next 2 helical transmembrane spans lie at Leu4–Ile24 and Ile53–Leu73.

This sequence belongs to the ATPase C chain family. As to quaternary structure, F-type ATPases have 2 components, F(1) - the catalytic core - and F(0) - the membrane proton channel. F(1) has five subunits: alpha(3), beta(3), gamma(1), delta(1), epsilon(1). F(0) has three main subunits: a(1), b(2) and c(10-14). The alpha and beta chains form an alternating ring which encloses part of the gamma chain. F(1) is attached to F(0) by a central stalk formed by the gamma and epsilon chains, while a peripheral stalk is formed by the delta and b chains.

The protein resides in the cell inner membrane. In terms of biological role, f(1)F(0) ATP synthase produces ATP from ADP in the presence of a proton or sodium gradient. F-type ATPases consist of two structural domains, F(1) containing the extramembraneous catalytic core and F(0) containing the membrane proton channel, linked together by a central stalk and a peripheral stalk. During catalysis, ATP synthesis in the catalytic domain of F(1) is coupled via a rotary mechanism of the central stalk subunits to proton translocation. Its function is as follows. Key component of the F(0) channel; it plays a direct role in translocation across the membrane. A homomeric c-ring of between 10-14 subunits forms the central stalk rotor element with the F(1) delta and epsilon subunits. The protein is ATP synthase subunit c of Geobacter metallireducens (strain ATCC 53774 / DSM 7210 / GS-15).